The sequence spans 168 residues: N-alpha-acetyltransferase 50 (168 aa).

Positions 5-154 (IELGDVTPHN…DAHVLQKSLR (150 aa)) constitute an N-acetyltransferase domain. Tyr-30 lines the substrate pocket. Residue Tyr-72 is part of the active site. Met-74 contacts substrate. 76 to 89 (LGCLAPYRRLGIGT) is an acetyl-CoA binding site. His-111 is a catalytic residue. 116 to 125 (NESAIDFYQK) lines the CoA pocket. The tract at residues 137-140 (YYKR) is substrate.

This sequence belongs to the acetyltransferase family. GNAT subfamily. Interacts with naa35.

It localises to the cytoplasm. It is found in the nucleus. It carries out the reaction N-terminal L-methionyl-L-alanyl-[protein] + acetyl-CoA = N-terminal N(alpha)-acetyl-L-methionyl-L-alanyl-[protein] + CoA + H(+). It catalyses the reaction N-terminal L-methionyl-L-seryl-[protein] + acetyl-CoA = N-terminal N(alpha)-acetyl-L-methionyl-L-seryl-[protein] + CoA + H(+). The catalysed reaction is N-terminal L-methionyl-L-valyl-[protein] + acetyl-CoA = N-terminal N(alpha)-acetyl-L-methionyl-L-valyl-[protein] + CoA + H(+). The enzyme catalyses N-terminal L-methionyl-L-threonyl-[protein] + acetyl-CoA = N-terminal N(alpha)-acetyl-L-methionyl-L-threonyl-[protein] + CoA + H(+). It carries out the reaction N-terminal L-methionyl-L-lysyl-[protein] + acetyl-CoA = N-terminal N(alpha)-acetyl-L-methionyl-L-lysyl-[protein] + CoA + H(+). It catalyses the reaction N-terminal L-methionyl-L-leucyl-[protein] + acetyl-CoA = N-terminal N(alpha)-acetyl-L-methionyl-L-leucyl-[protein] + CoA + H(+). The catalysed reaction is N-terminal L-methionyl-L-phenylalanyl-[protein] + acetyl-CoA = N-terminal N(alpha)-acetyl-L-methionyl-L-phenylalanyl-[protein] + CoA + H(+). The enzyme catalyses N-terminal L-methionyl-L-tyrosyl-[protein] + acetyl-CoA = N-terminal N(alpha)-acetyl-L-methionyl-L-tyrosyl-[protein] + CoA + H(+). In terms of biological role, N-alpha-acetyltransferase that acetylates the N-terminus of proteins that retain their initiating methionine. Has a broad substrate specificity: able to acetylate the initiator methionine of most peptides, except for those with a proline in second position. Also displays N-epsilon-acetyltransferase activity by mediating acetylation of the side chain of specific lysines on proteins. The relevance of N-epsilon-acetyltransferase activity is however unclear. Required for sister chromatid cohesion during mitosis by promoting binding of CDCA5/sororin to cohesin. Essential in embryonic cell proliferation and survival. In Danio rerio (Zebrafish), this protein is N-alpha-acetyltransferase 50 (naa50).